Consider the following 704-residue polypeptide: Glycine--tRNA ligase beta subunit (704 aa).

The protein belongs to the class-II aminoacyl-tRNA synthetase family. In terms of assembly, tetramer of two alpha and two beta subunits.

It is found in the cytoplasm. It carries out the reaction tRNA(Gly) + glycine + ATP = glycyl-tRNA(Gly) + AMP + diphosphate. This chain is Glycine--tRNA ligase beta subunit, found in Rhizobium etli (strain CIAT 652).